A 1808-amino-acid polypeptide reads, in one-letter code: Tenascin (1808 aa).

An N-terminal signal peptide occupies residues 1-22 (MGLPSQVLACAILGLLYQHASG). The propeptide occupies 23–33 (GLIKRIIRQKR). N38 is a glycosylation site (N-linked (GlcNAc...) asparagine). O-linked (Xyl...) (chondroitin sulfate) serine glycosylation occurs at S72. The stretch at 118–142 (DIKDLLSRLEELEGLVSSLREQCAS) forms a coiled coil. N-linked (GlcNAc...) asparagine glycans are attached at residues N168 and N186. The region spanning 176–188 (CVCEPGWKGPNCS) is the EGF-like 1; incomplete domain. 13 consecutive EGF-like domains span residues 188–219 (SEPA…EDCS), 219–250 (SQAA…PDCG), 250–281 (GEEL…EDCN), 281–312 (NEPL…EDCG), 312–343 (GELI…EDCG), 343–374 (GELT…DDCS), 374–405 (SQKR…EDCG), 405–436 (GELR…EDCG), 436–467 (GELR…EDCG), 467–498 (GELR…EDCG), 498–529 (GELR…EDCG), 529–560 (GELS…EDCR), and 560–591 (RERS…IDCS). Cystine bridges form between C192/C202, C196/C207, C209/C218, C223/C233, C227/C238, C240/C249, C254/C264, C258/C269, C271/C280, C285/C295, C289/C300, C302/C311, C316/C326, C320/C331, C333/C342, C347/C357, C351/C362, C364/C373, C378/C388, C382/C393, C395/C404, C409/C419, C413/C424, C426/C435, C440/C450, C444/C455, C457/C466, C471/C481, C475/C486, C488/C497, C502/C512, C506/C517, C519/C528, C533/C543, C537/C548, C550/C559, C564/C574, C568/C579, and C581/C590. A glycan (N-linked (GlcNAc...) asparagine) is linked at N328. Fibronectin type-III domains are found at residues 595-685 (PPTE…LPAP), 686-775 (EGLK…TKLD), 776-866 (APSQ…DLDA), 867-957 (PRNL…TDLD), 958-1046 (NPKD…EEEP), 1047-1138 (ELGN…AHPE), 1139-1228 (VGEL…EAEP), 1229-1318 (EVDN…TVVG), 1319-1408 (SPKG…ALDS), 1409-1495 (PSGL…TGLD), and 1496-1584 (APKD…TGLL). N-linked (GlcNAc...) asparagine glycosylation is found at N603, N643, N751, and N759. N-linked (GlcNAc...) asparagine glycosylation is found at N1050, N1090, N1101, N1112, N1153, and N1183. An N-linked (GlcNAc...) asparagine glycan is attached at N1416. Positions 1582–1797 (GLLYPYPKDC…FAEMKLRPSS (216 aa)) constitute a Fibrinogen C-terminal domain. Residues N1736 and N1769 are each glycosylated (N-linked (GlcNAc...) asparagine).

This sequence belongs to the tenascin family. As to quaternary structure, homohexamer; disulfide-linked. A homotrimer may be formed in the triple coiled-coil region and may be stabilized by disulfide rings at both ends. Two of such half-hexabrachions may be disulfide linked within the central globule. Interacts with CSPG5. Expressed in the brain.

It localises to the secreted. Its subcellular location is the extracellular space. It is found in the extracellular matrix. Extracellular matrix protein implicated in guidance of migrating neurons as well as axons during development, synaptic plasticity as well as neuronal regeneration. Ligand for integrins alpha-8/beta-1, alpha-9/beta-1, alpha-V/beta-3 and alpha-V/beta-6. The sequence is that of Tenascin (TNC) from Gallus gallus (Chicken).